Consider the following 262-residue polypeptide: Short-chain reductase protein NovJ (262 aa).

NADP(+) is bound by residues 23-26 and 73-74; these read GAGR and DV. Position 152 (Ser-152) interacts with substrate. Tyr-164 serves as the catalytic Proton acceptor. 164-168 lines the NADP(+) pocket; it reads YATAK.

The protein belongs to the short-chain dehydrogenases/reductases (SDR) family. As to quaternary structure, heterotetramer; the NovJ(2)K(2) heterotetramer is composed of subunits of 2 NovJ and 2 subunits of NovK.

The protein operates within antibiotic biosynthesis; novobiocin biosynthesis. Catalytic subunit of the NovJ(2)K(2) heterotetramer that catalyzes the NADPH-dependent reduction of the tyrosyl moiety of L-beta-OH-Tyr-S-NovH intermediate to yield the tethered beta-ketotyrosyl-S-NovH in the novobiocin biosynthesis pathway. Novobiocin is an aminocoumarin family antibiotic that targets bacterial DNA gyrases. This chain is Short-chain reductase protein NovJ (novJ), found in Streptomyces niveus (Streptomyces spheroides).